A 243-amino-acid polypeptide reads, in one-letter code: Vimentin A2 (243 aa).

The tract at residues 1-22 is coil 1B; it reads GFSLQDELDFLKKLHDEELADV. The 188-residue stretch at 1–188 folds into the IF rod domain; it reads GFSLQDELDF…KLLEGEESRI (188 aa). The interval 23 to 45 is linker 12; the sequence is QAQIQDQQVQVDMDMAKPDLTAA. The interval 46-184 is coil 2; sequence LRDVRLQYEN…ATYRKLLEGE (139 aa). Positions 185–243 are tail; sequence ESRITTPLPNLSSFNLRDAILETKPILENTFSKKVLIKTIETRDGEVINESTQNHDDLE.

The protein belongs to the intermediate filament family. In terms of assembly, homomer. One of the most prominent phosphoproteins in various cells of mesenchymal origin. Phosphorylation is enhanced during cell division, at which time vimentin filaments are significantly reorganized. Expressed in low amounts in retina, optic nerve, and brain and in higher amounts in spinal cord.

Functionally, vimentins are class-III intermediate filaments found in various non-epithelial cells, especially mesenchymal cells. Vimentin is attached to the nucleus, endoplasmic reticulum, and mitochondria, either laterally or terminally. This chain is Vimentin A2, found in Carassius auratus (Goldfish).